The following is a 966-amino-acid chain: MASTTVAQLAAELSRSAAALLEQLQAAGLGKATPEDIVTESDKTRLLDYLKRSHGQADDSARKKITLTKRETSEIRQADSTGKTRTVQVEVRKKRVLIKRDEAGADQHNEAADQHALAAEAAEQARREEEERQQAAELARQEAEAKARREAAEREEAERRAKQEALEAEQRRQAELLARKAEEEAAAARAVGEAAEDASRKKAEDEQARVAVERAAAQKAADDAKAAADKARAEQDAARKRREAAEAEARAIQQMLNAPARVLKAPSERKAEEKKAEQTGTLHKPVKPASATATEAKAGDKKPAATTTTTTATTTADKKGKTGKPGSWQDDSSRKKGSGLKTRGDSSGGVGGWRGGPRGRGGRQQHADDGRSNFQAPTEPVVREVHVPETISVADLAHKMAVKASEVIKQMMKLGQMVTINQVLDQETAMIVVEEMGHKAFAAKLDDPEALLVVDGEEHTDAEQLPRPPVVTVMGHVDHGKTSLLDYIRRAKVAAGEAGGITQHIGAYHVETERGVITFLDTPGHEAFTAMRARGAKATDIVILVVAADDGVMPQTKEAIAHAKAAGVPIVVAINKIDKPDANPDRVKQELVAEQVLPEEYGGDSPFVPVSAKTGAGIEDLLEQVLLQAEVLELKAPVDAPAKGLVVEAQLDKGKGPIATILVSSGTLKRGDVVLAGSAYGRVRAMLDENGKPTKEAGPSIPVEIQGLSEVPAAGEEVLVLPDERKAREIALFRQGKFRDVKLAKQQAAKLETMLEQMTEGDVQTLPLIVKADVQGSQEALVQSLQKLSTAEVRVQIVHAGVGAISESDVNLATASKAVIIGFNVRADAGARKLAENHGIDIRYYNIIYDAVDEIKAAMSGMLAPEKRETTIGQVEVRQVFRVPKIGAVAGCMVTDGLVKRNSLVRVLRNNVVVHTGELDSLKRFKDDVKEVKQGFECGLSIKNFNDVQEGDQLEVYEITEVARTL.

Composition is skewed to basic and acidic residues over residues 99 to 113 (KRDE…EAAD), 123 to 183 (EQAR…KAEE), 197 to 212 (DASR…RVAV), 220 to 249 (AADD…EAEA), and 266 to 277 (PSERKAEEKKAE). Residues 99 to 382 (KRDEAGADQH…NFQAPTEPVV (284 aa)) form a disordered region. Positions 304 to 315 (AATTTTTTATTT) are enriched in low complexity. A compositionally biased stretch (gly residues) spans 346 to 359 (SSGGVGGWRGGPRG). In terms of domain architecture, tr-type G spans 466-635 (PRPPVVTVMG…LLQAEVLELK (170 aa)). Positions 475–482 (GHVDHGKT) are G1. 475 to 482 (GHVDHGKT) contributes to the GTP binding site. Residues 500–504 (GITQH) form a G2 region. The interval 521 to 524 (DTPG) is G3. Residues 521–525 (DTPGH) and 575–578 (NKID) each bind GTP. Residues 575-578 (NKID) are G4. The G5 stretch occupies residues 611–613 (SAK).

This sequence belongs to the TRAFAC class translation factor GTPase superfamily. Classic translation factor GTPase family. IF-2 subfamily.

It is found in the cytoplasm. One of the essential components for the initiation of protein synthesis. Protects formylmethionyl-tRNA from spontaneous hydrolysis and promotes its binding to the 30S ribosomal subunits. Also involved in the hydrolysis of GTP during the formation of the 70S ribosomal complex. This is Translation initiation factor IF-2 from Cupriavidus pinatubonensis (strain JMP 134 / LMG 1197) (Cupriavidus necator (strain JMP 134)).